The following is a 176-amino-acid chain: 2-oxo-4-hydroxy-4-carboxy-5-ureidoimidazoline decarboxylase (176 aa).

Histidine 70 functions as the Proton donor; for OHCU decarboxylase activity in the catalytic mechanism. Residues proline 71, 83–87 (SQEEQ), and 118–122 (FIMAV) each bind substrate. The segment at 72-96 (DLGERTEMTDESQEEQASAGLDRLP) is disordered.

The protein belongs to the OHCU decarboxylase family.

The enzyme catalyses 5-hydroxy-2-oxo-4-ureido-2,5-dihydro-1H-imidazole-5-carboxylate + H(+) = (S)-allantoin + CO2. The protein operates within purine metabolism; urate degradation; (S)-allantoin from urate: step 3/3. Functionally, catalyzes the stereoselective decarboxylation of 2-oxo-4-hydroxy-4-carboxy-5-ureidoimidazoline (OHCU) to (S)-allantoin. In Halalkalicoccus jeotgali (strain DSM 18796 / CECT 7217 / JCM 14584 / KCTC 4019 / B3), this protein is 2-oxo-4-hydroxy-4-carboxy-5-ureidoimidazoline decarboxylase.